The following is a 186-amino-acid chain: Intraflagellar transport protein 27 homolog (186 aa).

Residues 12–19 (GDPAVGKT), 64–68 (DSAGK), and 123–126 (NKTD) each bind GTP.

It belongs to the small GTPase superfamily. Rab family. As to quaternary structure, component of the IFT complex B, at least composed of IFT20, IFT25, IFT27, IFT52, IFT57, IFT74, IFT81, IFT88 and TRAF3IP1. Interacts with IFT25. Interacts with IFT70B. Interacts with RABL2/RABL2A; binding is equal in the presence of GTP or GDP. Interacts with ARL6; recognizes and binds with the GTP-free form of ARL6.

The protein localises to the cell projection. Its subcellular location is the cilium. The protein resides in the cytoplasm. It localises to the flagellum. Functionally, small GTPase-like component of the intraflagellar transport (IFT) complex B that promotes the exit of the BBSome complex from cilia via its interaction with ARL6. Not involved in entry of the BBSome complex into cilium. Prevents aggregation of GTP-free ARL6. Required for hedgehog signaling. Forms a subcomplex within the IFT complex B with IFT25. Its role in intraflagellar transport is mainly seen in tissues rich in ciliated cells such as kidney and testis. Essential for male fertility, spermiogenesis and sperm flagella formation. Plays a role in the early development of the kidney. May be involved in the regulation of ureteric bud initiation. The chain is Intraflagellar transport protein 27 homolog (IFT27) from Homo sapiens (Human).